The chain runs to 513 residues: Noroxomaritidine synthase 1 (513 aa).

The helical transmembrane segment at 18 to 34 (ILIAIACLVVFSLLRSA) threads the bilayer. Cys-458 is a binding site for heme.

This sequence belongs to the cytochrome P450 family. Heme is required as a cofactor. Mostly expressed in stems, and, to a lower extent, in bulbs, roots, leaves and flowers.

Its subcellular location is the membrane. It carries out the reaction 4'-O-methylnorbelladine + reduced [NADPH--hemoprotein reductase] + O2 = (10bR,4aS)-noroxomaritidine + oxidized [NADPH--hemoprotein reductase] + 2 H2O + H(+). It catalyses the reaction 4'-O-methylnorbelladine + reduced [NADPH--hemoprotein reductase] + O2 = (10bS,4aR)-noroxomaritidine + oxidized [NADPH--hemoprotein reductase] + 2 H2O + H(+). The protein operates within alkaloid biosynthesis. Its function is as follows. Cytochrome P450 that catalyzes an intramolecular para-para' C-C phenol coupling of 4'-O-methylnorbelladine in alkaloids biosynthesis, including haemanthamine- and crinamine-type alkaloids, promising anticancer agents. Catalyzes the formation of (10bR,4aS)-noroxomaritidine and (10bS,4aR)-noroxomaritidine from 4'-O-methylnorbelladine. The protein is Noroxomaritidine synthase 1 of Narcissus pseudonarcissus (Daffodil).